We begin with the raw amino-acid sequence, 160 residues long: Cytochrome b6-f complex subunit 4 (160 aa).

Helical transmembrane passes span 36–56 (LLYM…GLAV), 95–115 (LLGV…PFIE), and 131–151 (TIFL…TLPI).

This sequence belongs to the cytochrome b family. PetD subfamily. As to quaternary structure, the 4 large subunits of the cytochrome b6-f complex are cytochrome b6, subunit IV (17 kDa polypeptide, petD), cytochrome f and the Rieske protein, while the 4 small subunits are petG, petL, petM and petN. The complex functions as a dimer.

It is found in the plastid. It localises to the chloroplast thylakoid membrane. Its function is as follows. Component of the cytochrome b6-f complex, which mediates electron transfer between photosystem II (PSII) and photosystem I (PSI), cyclic electron flow around PSI, and state transitions. The sequence is that of Cytochrome b6-f complex subunit 4 from Staurastrum punctulatum (Green alga).